We begin with the raw amino-acid sequence, 162 residues long: Large ribosomal subunit protein uL11 (162 aa).

Positions 1–27 are disordered; the sequence is MAGTIEVLVPGGEANPGPPLGPELGPT.

The protein belongs to the universal ribosomal protein uL11 family. As to quaternary structure, part of the 50S ribosomal subunit. Forms part of the ribosomal stalk which helps the ribosome interact with GTP-bound translation factors. Forms a heptameric L10(L12)2(L12)2(L12)2 complex, where L10 forms an elongated spine to which 3 L12 dimers bind in a sequential fashion.

Functionally, forms part of the ribosomal stalk which helps the ribosome interact with GTP-bound translation factors. The sequence is that of Large ribosomal subunit protein uL11 from Haloarcula marismortui (strain ATCC 43049 / DSM 3752 / JCM 8966 / VKM B-1809) (Halobacterium marismortui).